A 508-amino-acid chain; its full sequence is Light-independent protochlorophyllide reductase subunit B (508 aa).

Asp36 contacts [4Fe-4S] cluster. The active-site Proton donor is Asp294. Residue 429–430 (GM) coordinates substrate.

It belongs to the ChlB/BchB/BchZ family. As to quaternary structure, protochlorophyllide reductase is composed of three subunits; ChlL, ChlN and ChlB. Forms a heterotetramer of two ChlB and two ChlN subunits. Requires [4Fe-4S] cluster as cofactor.

The protein resides in the plastid. It is found in the chloroplast. It catalyses the reaction chlorophyllide a + oxidized 2[4Fe-4S]-[ferredoxin] + 2 ADP + 2 phosphate = protochlorophyllide a + reduced 2[4Fe-4S]-[ferredoxin] + 2 ATP + 2 H2O. The protein operates within porphyrin-containing compound metabolism; chlorophyll biosynthesis (light-independent). In terms of biological role, component of the dark-operative protochlorophyllide reductase (DPOR) that uses Mg-ATP and reduced ferredoxin to reduce ring D of protochlorophyllide (Pchlide) to form chlorophyllide a (Chlide). This reaction is light-independent. The NB-protein (ChlN-ChlB) is the catalytic component of the complex. This is Light-independent protochlorophyllide reductase subunit B from Pyropia yezoensis (Susabi-nori).